Reading from the N-terminus, the 101-residue chain is Small ribosomal subunit protein uS14 (101 aa).

It belongs to the universal ribosomal protein uS14 family. In terms of assembly, part of the 30S ribosomal subunit. Contacts proteins S3 and S10.

Functionally, binds 16S rRNA, required for the assembly of 30S particles and may also be responsible for determining the conformation of the 16S rRNA at the A site. This chain is Small ribosomal subunit protein uS14, found in Nitrosospira multiformis (strain ATCC 25196 / NCIMB 11849 / C 71).